The following is a 247-amino-acid chain: E3 ubiquitin-protein ligase RNF182 (247 aa).

The RING-type zinc-finger motif lies at 20-68 (CKICYNRYNLKQRKPKVLECCHRVCAKCLYKIIDFGDSPQGVIVCPFCR). Transmembrane regions (helical) follow at residues 184–204 (VLVWLLGLLYFSSLPLGIYLL) and 211–231 (LGVVFVSLVPSSLVILMVYGF).

As to quaternary structure, interacts with ATP6V0C.

Its subcellular location is the membrane. The protein localises to the cytoplasm. It carries out the reaction S-ubiquitinyl-[E2 ubiquitin-conjugating enzyme]-L-cysteine + [acceptor protein]-L-lysine = [E2 ubiquitin-conjugating enzyme]-L-cysteine + N(6)-ubiquitinyl-[acceptor protein]-L-lysine.. It functions in the pathway protein modification; protein ubiquitination. E3 ubiquitin-protein ligase that mediates the ubiquitination of ATP6V0C and targets it to degradation via the ubiquitin-proteasome pathway. Also plays a role in the inhibition of TLR-triggered innate immune response by mediating 'Lys'-48-linked ubiquitination and subsequent degradation of NF-kappa-B component RELA. This Rattus norvegicus (Rat) protein is E3 ubiquitin-protein ligase RNF182 (Rnf182).